Reading from the N-terminus, the 510-residue chain is Chorion transcription factor Cf2 (510 aa).

The span at 1 to 10 (MIKSTTNPQE) shows a compositional bias: polar residues. Positions 1 to 40 (MIKSTTNPQEQRLPRPEDQSPAPPPPPPSSATTSTAAPAT) are disordered. Residues 30–40 (SATTSTAAPAT) are compositionally biased toward low complexity. 2 consecutive C2H2-type zinc fingers follow at residues 74-97 (HYCPMCHQQFERPQHVADHMQLCH) and 125-148 (HPCFNCDEKFGNAVDLDEHHRLAH). A compositionally biased stretch (basic and acidic residues) spans 222-237 (PEEQHHQQQLQAEHHH). The disordered stretch occupies residues 222–279 (PEEQHHQQQLQAEHHHQQQHQQQQQQQQQQQELLEQQQREMQEQAQQQQVHHHQQDQD). Low complexity predominate over residues 240-257 (QHQQQQQQQQQQQELLEQ). 5 C2H2-type zinc fingers span residues 366 to 388 (HKCPDCPKTFKTPGTLAMHRKIH), 401 to 423 (YTCSYCGKSFTQSNTLKQHTRIH), 429 to 451 (FRCGYCGRAFTVKDYLNKHLTTH), 457 to 479 (FHCGYCEKSFSVKDYLTKHIRTH), and 485 to 508 (YTCPYCDKRFTQRSALTVHTTKLH).

Isoform I is found in embryos, pupae and adult somatic tissue; isoform II occurs in embryos, pupae, ovaries, testis and to a lesser extent in adult somatic tissue.

It is found in the nucleus. Functionally, transcriptional regulator; binds to the promoter region of Cp15. Also binds to its own promoter, thus having a probable autoregulatory role. This chain is Chorion transcription factor Cf2 (Cf2), found in Drosophila melanogaster (Fruit fly).